Here is a 176-residue protein sequence, read N- to C-terminus: MVGRLARLRDSIAHTGVPMKTVEDENFHITLRFIGEVSEPVAAEIGERLASIRFERFRIELRGLGAFPRPDRPRVVWVGVGGGAGELRRIRDEVERILTSMGFSPEKQEFHPHVTLARIKGARNLPALVKLLREMGDVEVGSVEVSSIRLKQSILTRQGPIYKTLYEVKAASSGRV.

The active-site Proton donor is the H28. 2 consecutive short sequence motifs (HXTX) follow at residues H28–L31 and H113–L116. The active-site Proton acceptor is H113.

This sequence belongs to the 2H phosphoesterase superfamily. ThpR family.

It catalyses the reaction a 3'-end 2',3'-cyclophospho-ribonucleotide-RNA + H2O = a 3'-end 2'-phospho-ribonucleotide-RNA + H(+). Hydrolyzes RNA 2',3'-cyclic phosphodiester to an RNA 2'-phosphomonoester. In Aeropyrum pernix (strain ATCC 700893 / DSM 11879 / JCM 9820 / NBRC 100138 / K1), this protein is RNA 2',3'-cyclic phosphodiesterase.